A 233-amino-acid polypeptide reads, in one-letter code: Large ribosomal subunit protein uL1 (233 aa).

Belongs to the universal ribosomal protein uL1 family. Part of the 50S ribosomal subunit.

Binds directly to 23S rRNA. The L1 stalk is quite mobile in the ribosome, and is involved in E site tRNA release. In terms of biological role, protein L1 is also a translational repressor protein, it controls the translation of the L11 operon by binding to its mRNA. In Shewanella loihica (strain ATCC BAA-1088 / PV-4), this protein is Large ribosomal subunit protein uL1.